We begin with the raw amino-acid sequence, 204 residues long: Somatotropin (204 aa).

Residues 1 to 17 (MDRVLLLLSVLSLGVSS) form the signal peptide. A Pyrrolidone carboxylic acid modification is found at glutamine 18. Histidine 36 lines the Zn(2+) pocket. Cysteine 69 and cysteine 177 are disulfide-bonded. Residue glutamate 186 participates in Zn(2+) binding. A disulfide bridge connects residues cysteine 194 and cysteine 202.

The protein belongs to the somatotropin/prolactin family.

It localises to the secreted. Growth hormone plays an important role in growth control and is involved in the regulation of several anabolic processes. Implicated as an osmoregulatory substance important for seawater adaptation. This chain is Somatotropin (gh), found in Sciaenops ocellatus (Red drum).